The chain runs to 265 residues: Tryptophan synthase alpha chain (265 aa).

Catalysis depends on proton acceptor residues glutamate 49 and aspartate 60.

The protein belongs to the TrpA family. Tetramer of two alpha and two beta chains.

The enzyme catalyses (1S,2R)-1-C-(indol-3-yl)glycerol 3-phosphate + L-serine = D-glyceraldehyde 3-phosphate + L-tryptophan + H2O. It functions in the pathway amino-acid biosynthesis; L-tryptophan biosynthesis; L-tryptophan from chorismate: step 5/5. The alpha subunit is responsible for the aldol cleavage of indoleglycerol phosphate to indole and glyceraldehyde 3-phosphate. The protein is Tryptophan synthase alpha chain of Cupriavidus taiwanensis (strain DSM 17343 / BCRC 17206 / CCUG 44338 / CIP 107171 / LMG 19424 / R1) (Ralstonia taiwanensis (strain LMG 19424)).